The following is a 124-amino-acid chain: Astakine (124 aa).

Residues methionine 1–glycine 21 form the signal peptide. 5 disulfide bridges follow: cysteine 28-cysteine 40, cysteine 34-cysteine 52, cysteine 39-cysteine 91, cysteine 62-cysteine 99, and cysteine 93-cysteine 106.

It belongs to the AVIT (prokineticin) family.

Its subcellular location is the secreted. Its function is as follows. Cytokine directly involved in hematopoiesis. The sequence is that of Astakine from Penaeus monodon (Giant tiger prawn).